The sequence spans 87 residues: Alpha-toxin To2 (87 aa).

The signal sequence occupies residues 1–20 (MIRFVLFISCFFLIGTVVEC). An LCN-type CS-alpha/beta domain is found at 22 to 84 (KDGYLMEGDG…IWDSKNNKCG (63 aa)). 4 disulfide bridges follow: C32–C83, C36–C58, C44–C64, and C48–C66. At K85 the chain carries Lysine amide.

Expressed by the venom gland.

The protein localises to the secreted. Alpha toxins bind voltage-independently at site-3 of sodium channels (Nav) and inhibit the inactivation of the activated channels, thereby blocking neuronal transmission. Affects the tetrodotoxin-sensitive sodium current permeability of F-11 rat neuroblastoma cells. Produces a dose dependent increase in amplitude and duration of the current. This Tityus obscurus (Amazonian scorpion) protein is Alpha-toxin To2.